Consider the following 122-residue polypeptide: Small ribosomal subunit protein uS13 (122 aa).

The disordered stretch occupies residues 98–122 (VRGQRTHTNARTRKGPAKAIAGKKK).

The protein belongs to the universal ribosomal protein uS13 family. Part of the 30S ribosomal subunit. Forms a loose heterodimer with protein S19. Forms two bridges to the 50S subunit in the 70S ribosome.

Its function is as follows. Located at the top of the head of the 30S subunit, it contacts several helices of the 16S rRNA. In the 70S ribosome it contacts the 23S rRNA (bridge B1a) and protein L5 of the 50S subunit (bridge B1b), connecting the 2 subunits; these bridges are implicated in subunit movement. Contacts the tRNAs in the A and P-sites. In Ruegeria sp. (strain TM1040) (Silicibacter sp.), this protein is Small ribosomal subunit protein uS13.